The chain runs to 428 residues: Dihydroorotase (428 aa).

Zn(2+)-binding residues include histidine 59 and histidine 61. Residues 61–63 (HLR) and asparagine 93 contribute to the substrate site. 3 residues coordinate Zn(2+): aspartate 151, histidine 178, and histidine 231. Substrate is bound at residue asparagine 277. Residue aspartate 304 participates in Zn(2+) binding. Aspartate 304 is a catalytic residue. Substrate contacts are provided by residues histidine 308 and 322–323 (FG).

The protein belongs to the metallo-dependent hydrolases superfamily. DHOase family. Class I DHOase subfamily. Zn(2+) serves as cofactor.

The catalysed reaction is (S)-dihydroorotate + H2O = N-carbamoyl-L-aspartate + H(+). It participates in pyrimidine metabolism; UMP biosynthesis via de novo pathway; (S)-dihydroorotate from bicarbonate: step 3/3. Its function is as follows. Catalyzes the reversible cyclization of carbamoyl aspartate to dihydroorotate. The chain is Dihydroorotase from Bacillus anthracis (strain A0248).